The following is a 1142-amino-acid chain: GPI inositol-deacylase (1142 aa).

The tract at residues 24–59 (GFYKRNNANTASNDEKPNLEQNDIPSVTSSGSSTPS) is disordered. Residues 47–59 (IPSVTSSGSSTPS) show a composition bias toward low complexity. A helical transmembrane segment spans residues 81–101 (SWSLYVAIIAILLLLVILHSF). Ser264 is a catalytic residue. Asn596 and Asn679 each carry an N-linked (GlcNAc...) asparagine glycan. Helical transmembrane passes span 741-761 (LLAS…FRYF), 781-801 (GLIK…YLIS), 849-869 (LLTL…LCVM), and 946-966 (IIGI…QLVY). Asn1002 carries an N-linked (GlcNAc...) asparagine glycan. The helical transmembrane segment at 1006-1026 (TITILMLLLAPLDFPVLIVWA) threads the bilayer. An N-linked (GlcNAc...) asparagine glycan is attached at Asn1028. Helical transmembrane passes span 1035-1055 (IPFP…LTEI), 1075-1095 (VFLF…PYLI), and 1097-1117 (NVVG…GFFV). Asn1119 carries an N-linked (GlcNAc...) asparagine glycan.

The protein belongs to the GPI inositol-deacylase family.

It localises to the endoplasmic reticulum membrane. In terms of biological role, involved in inositol deacylation of GPI-anchored proteins which plays important roles in the quality control and ER-associated degradation of GPI-anchored proteins. The polypeptide is GPI inositol-deacylase (bst1) (Schizosaccharomyces pombe (strain 972 / ATCC 24843) (Fission yeast)).